A 162-amino-acid polypeptide reads, in one-letter code: Phosphopantetheine adenylyltransferase (162 aa).

Substrate is bound at residue Ser11. ATP contacts are provided by residues 11-12 (SF) and His19. Residues Lys43, Val76, and Arg90 each coordinate substrate. ATP is bound by residues 91 to 93 (GLR), Glu101, and 126 to 132 (HLYISSS).

Belongs to the bacterial CoaD family. Homohexamer. Mg(2+) serves as cofactor.

The protein localises to the cytoplasm. It catalyses the reaction (R)-4'-phosphopantetheine + ATP + H(+) = 3'-dephospho-CoA + diphosphate. Its pathway is cofactor biosynthesis; coenzyme A biosynthesis; CoA from (R)-pantothenate: step 4/5. Reversibly transfers an adenylyl group from ATP to 4'-phosphopantetheine, yielding dephospho-CoA (dPCoA) and pyrophosphate. The protein is Phosphopantetheine adenylyltransferase of Streptococcus pneumoniae (strain CGSP14).